We begin with the raw amino-acid sequence, 463 residues long: ATP synthase subunit beta (463 aa).

An ATP-binding site is contributed by 153–160; the sequence is GGAGVGKT.

It belongs to the ATPase alpha/beta chains family. As to quaternary structure, F-type ATPases have 2 components, CF(1) - the catalytic core - and CF(0) - the membrane proton channel. CF(1) has five subunits: alpha(3), beta(3), gamma(1), delta(1), epsilon(1). CF(0) has three main subunits: a(1), b(2) and c(9-12). The alpha and beta chains form an alternating ring which encloses part of the gamma chain. CF(1) is attached to CF(0) by a central stalk formed by the gamma and epsilon chains, while a peripheral stalk is formed by the delta and b chains.

It is found in the cell inner membrane. The catalysed reaction is ATP + H2O + 4 H(+)(in) = ADP + phosphate + 5 H(+)(out). In terms of biological role, produces ATP from ADP in the presence of a proton gradient across the membrane. The catalytic sites are hosted primarily by the beta subunits. In Burkholderia cepacia (Pseudomonas cepacia), this protein is ATP synthase subunit beta.